Here is a 164-residue protein sequence, read N- to C-terminus: Transcription elongation factor GreA (164 aa).

Residues 11–76 are a coiled coil; the sequence is EESYDRLKAE…LQELLNNAKV (66 aa).

Belongs to the GreA/GreB family.

Necessary for efficient RNA polymerase transcription elongation past template-encoded arresting sites. The arresting sites in DNA have the property of trapping a certain fraction of elongating RNA polymerases that pass through, resulting in locked ternary complexes. Cleavage of the nascent transcript by cleavage factors such as GreA or GreB allows the resumption of elongation from the new 3'terminus. GreA releases sequences of 2 to 3 nucleotides. The polypeptide is Transcription elongation factor GreA (Mycolicibacterium vanbaalenii (strain DSM 7251 / JCM 13017 / BCRC 16820 / KCTC 9966 / NRRL B-24157 / PYR-1) (Mycobacterium vanbaalenii)).